The following is a 154-amino-acid chain: 6,7-dimethyl-8-ribityllumazine synthase (154 aa).

5-amino-6-(D-ribitylamino)uracil contacts are provided by residues W22, 56–58 (AWE), and 80–82 (CVI). 85 to 86 (DT) provides a ligand contact to (2S)-2-hydroxy-3-oxobutyl phosphate. H88 (proton donor) is an active-site residue. Residue N113 coordinates 5-amino-6-(D-ribitylamino)uracil. R127 serves as a coordination point for (2S)-2-hydroxy-3-oxobutyl phosphate.

It belongs to the DMRL synthase family. In terms of assembly, forms an icosahedral capsid composed of 60 subunits, arranged as a dodecamer of pentamers.

It catalyses the reaction (2S)-2-hydroxy-3-oxobutyl phosphate + 5-amino-6-(D-ribitylamino)uracil = 6,7-dimethyl-8-(1-D-ribityl)lumazine + phosphate + 2 H2O + H(+). Its pathway is cofactor biosynthesis; riboflavin biosynthesis; riboflavin from 2-hydroxy-3-oxobutyl phosphate and 5-amino-6-(D-ribitylamino)uracil: step 1/2. Functionally, catalyzes the formation of 6,7-dimethyl-8-ribityllumazine by condensation of 5-amino-6-(D-ribitylamino)uracil with 3,4-dihydroxy-2-butanone 4-phosphate. This is the penultimate step in the biosynthesis of riboflavin. The polypeptide is 6,7-dimethyl-8-ribityllumazine synthase (Xanthomonas axonopodis pv. citri (strain 306)).